A 151-amino-acid chain; its full sequence is UPF0178 protein Tcr_1995 (151 aa).

The disordered stretch occupies residues 116 to 135 (RSSGVDTGGPPPLNQKDRQA).

Belongs to the UPF0178 family.

The protein is UPF0178 protein Tcr_1995 of Hydrogenovibrio crunogenus (strain DSM 25203 / XCL-2) (Thiomicrospira crunogena).